Here is a 284-residue protein sequence, read N- to C-terminus: Bifunctional protein FolD (284 aa).

NADP(+) is bound by residues 163-165 and S188; that span reads GRS.

It belongs to the tetrahydrofolate dehydrogenase/cyclohydrolase family. As to quaternary structure, homodimer.

The catalysed reaction is (6R)-5,10-methylene-5,6,7,8-tetrahydrofolate + NADP(+) = (6R)-5,10-methenyltetrahydrofolate + NADPH. It catalyses the reaction (6R)-5,10-methenyltetrahydrofolate + H2O = (6R)-10-formyltetrahydrofolate + H(+). It participates in one-carbon metabolism; tetrahydrofolate interconversion. In terms of biological role, catalyzes the oxidation of 5,10-methylenetetrahydrofolate to 5,10-methenyltetrahydrofolate and then the hydrolysis of 5,10-methenyltetrahydrofolate to 10-formyltetrahydrofolate. In Lactococcus lactis subsp. lactis (strain IL1403) (Streptococcus lactis), this protein is Bifunctional protein FolD.